We begin with the raw amino-acid sequence, 267 residues long: Lectin SfL-2 (267 aa).

4 consecutive repeat copies span residues 1-67 (GRYT…RRGE), 68-135 (SNNY…QAEG), 136-202 (DTYN…LTGA), and 203-267 (NNYK…GVAN). The tract at residues 1–267 (GRYTVQNQWG…GPIGFKGVAN (267 aa)) is 4 X approximate tandem repeats.

Monomer.

Functionally, lectin specific for high mannose N-glycans, recognizes the branched moiety of these glycans. Does not recognize other types of N-glycans or monosaccharides. The sequence is that of Lectin SfL-2 from Solieria filiformis (Red alga).